The sequence spans 125 residues: Fluoride-specific ion channel FluC (125 aa).

4 helical membrane passes run 4–24 (LMLV…TVTA), 32–52 (AFPW…GLLV), 67–87 (LLLA…SLDV), and 100–120 (LAYV…GLWL). Positions 75 and 78 each coordinate Na(+).

This sequence belongs to the fluoride channel Fluc/FEX (TC 1.A.43) family.

Its subcellular location is the cell inner membrane. It carries out the reaction fluoride(in) = fluoride(out). Na(+) is not transported, but it plays an essential structural role and its presence is essential for fluoride channel function. Functionally, fluoride-specific ion channel. Important for reducing fluoride concentration in the cell, thus reducing its toxicity. The polypeptide is Fluoride-specific ion channel FluC (Chelativorans sp. (strain BNC1)).